The sequence spans 436 residues: 3-ketoacyl-CoA thiolase (436 aa).

Residue Cys-99 is the Acyl-thioester intermediate of the active site. Residues His-392 and Cys-422 each act as proton acceptor in the active site.

Belongs to the thiolase-like superfamily. Thiolase family. In terms of assembly, heterotetramer of two alpha chains (FadJ) and two beta chains (FadI).

Its subcellular location is the cytoplasm. The catalysed reaction is an acyl-CoA + acetyl-CoA = a 3-oxoacyl-CoA + CoA. It functions in the pathway lipid metabolism; fatty acid beta-oxidation. Catalyzes the final step of fatty acid oxidation in which acetyl-CoA is released and the CoA ester of a fatty acid two carbons shorter is formed. This chain is 3-ketoacyl-CoA thiolase, found in Salmonella paratyphi A (strain ATCC 9150 / SARB42).